Here is a 246-residue protein sequence, read N- to C-terminus: NLP effector protein Pc118548 (246 aa).

An N-terminal signal peptide occupies residues 1–19 (MNFRAFLLAAIAGIATINA). Residues 122 to 128 (GHRHYWE) carry the Hepta-peptide GHRHDWE motif motif. The N-linked (GlcNAc...) asparagine glycan is linked to asparagine 141.

The protein belongs to the Necrosis inducing protein (NPP1) family.

Its subcellular location is the secreted. Secreted effector that contributes strongly to virulence during infection by P.capsici. Induces cell death in the Solanaceae, including Nicotiana benthamiana and hot pepper. The protein is NLP effector protein Pc118548 of Phytophthora capsici.